The following is a 717-amino-acid chain: ATP-dependent zinc metalloprotease FtsH (717 aa).

The Cytoplasmic portion of the chain corresponds to 1–9 (MKNASRIFK). A helical transmembrane segment spans residues 10–30 (GPLIWILLCIGLIIVFLQFAG). The Extracellular segment spans residues 31-111 (SGNGYKDIPT…SWQGENPGQS (81 aa)). A helical membrane pass occupies residues 112 to 132 (IWKALLINFLPFVIILLFFLW). Residues 133–717 (AMNAAQGMGG…NGNPWGPPRS (585 aa)) lie on the Cytoplasmic side of the membrane. 207–214 (GPPGTGKT) serves as a coordination point for ATP. H429 lines the Zn(2+) pocket. E430 is an active-site residue. Zn(2+) is bound by residues H433 and D505. Positions 617-717 (AFTGSDKRVP…NGNPWGPPRS (101 aa)) are disordered. A compositionally biased stretch (pro residues) spans 691–717 (PEPPSPTHPGEGPQPPSNGNPWGPPRS).

In the central section; belongs to the AAA ATPase family. This sequence in the C-terminal section; belongs to the peptidase M41 family. Homohexamer. Zn(2+) serves as cofactor.

The protein localises to the cell membrane. In terms of biological role, acts as a processive, ATP-dependent zinc metallopeptidase for both cytoplasmic and membrane proteins. Plays a role in the quality control of integral membrane proteins. This is ATP-dependent zinc metalloprotease FtsH from Cutibacterium acnes (strain SK137) (Propionibacterium acnes).